Here is a 203-residue protein sequence, read N- to C-terminus: Transmembrane emp24 domain-containing protein (203 aa).

The signal sequence occupies residues 1 to 22; the sequence is MASIRLLPSCIVLMFLARSSLC. Topologically, residues 23–170 are lumenal; sequence YFITIDAHGE…RSINDNTNSR (148 aa). A GOLD domain is found at 32–114; sequence EECFHDKVTS…PKVLKFSMDI (83 aa). The helical transmembrane segment at 171 to 191 threads the bilayer; it reads VVWWSFFESLVLVAMTLGQVY. Residues 192 to 203 lie on the Cytoplasmic side of the membrane; the sequence is YLKRFFEVRRVV.

It belongs to the EMP24/GP25L family.

It localises to the cytoplasmic vesicle membrane. Its function is as follows. Could have a role in the budding of coatomer-coated and other species of coated vesicles. This Nematostella vectensis (Starlet sea anemone) protein is Transmembrane emp24 domain-containing protein.